The sequence spans 356 residues: Histidinol-phosphate aminotransferase (356 aa).

At lysine 214 the chain carries N6-(pyridoxal phosphate)lysine.

The protein belongs to the class-II pyridoxal-phosphate-dependent aminotransferase family. Histidinol-phosphate aminotransferase subfamily. In terms of assembly, homodimer. Pyridoxal 5'-phosphate is required as a cofactor.

The enzyme catalyses L-histidinol phosphate + 2-oxoglutarate = 3-(imidazol-4-yl)-2-oxopropyl phosphate + L-glutamate. The protein operates within amino-acid biosynthesis; L-histidine biosynthesis; L-histidine from 5-phospho-alpha-D-ribose 1-diphosphate: step 7/9. This Escherichia coli O7:K1 (strain IAI39 / ExPEC) protein is Histidinol-phosphate aminotransferase.